A 342-amino-acid chain; its full sequence is MKGKFLKVSSLFVATLTTATLVSSPAANALSSKAMDNHPQQTQSSKQQTPKIKKGGNLKPLEQREHANVILPNNDRHQITDTTNGHYAPVTYIQVEAPTGTFIASGVVVGKDTLLTNKHVVDATHGDPHALKAFPSAINQDNYPNGGFTAEQITKYSGEGDLAIVKFSPNEQNKHIGEVVKPATMSNNAETQVNQNITVTGYPGDKPVATMWESKGKITYLKGEAMQYDLSTTGGNSGSPVFNEKNEVIGIHWGGVPNEFNGAVFINENVRNFLKQNIEDIHFANDDQPNNPDNPDNPNNPDNPNNPDNPNNPDEPNNPDNPNNPDNPDNGDNNNSDNPDAA.

Positions 1–29 (MKGKFLKVSSLFVATLTTATLVSSPAANA) are cleaved as a signal peptide. Residues 30 to 68 (LSSKAMDNHPQQTQSSKQQTPKIKKGGNLKPLEQREHAN) constitute a propeptide that is removed on maturation. The disordered stretch occupies residues 33 to 63 (KAMDNHPQQTQSSKQQTPKIKKGGNLKPLEQ). Positions 39–50 (PQQTQSSKQQTP) are enriched in low complexity. Residues H119, D161, and S237 each act as charge relay system in the active site. The tract at residues 283–342 (FANDDQPNNPDNPDNPNNPDNPNNPDNPNNPDEPNNPDNPNNPDNPDNGDNNNSDNPDAA) is disordered. Over residues 286–342 (DDQPNNPDNPDNPNNPDNPNNPDNPNNPDEPNNPDNPNNPDNPDNGDNNNSDNPDAA) the composition is skewed to low complexity. Repeat copies occupy residues 289-291 (PNN), 292-294 (PDN), 295-297 (PDN), 298-300 (PNN), 301-303 (PDN), 304-306 (PNN), 307-309 (PDN), 310-312 (PNN), 316-318 (PNN), 319-321 (PDN), 322-324 (PNN), 325-327 (PDN), and 328-330 (PDN). The 13 X 3 AA repeats of P-[DN]-N stretch occupies residues 289–330 (PNNPDNPDNPNNPDNPNNPDNPNNPDEPNNPDNPNNPDNPDN).

This sequence belongs to the peptidase S1B family. In terms of processing, proteolytically cleaved by aureolysin (aur). This cleavage leads to the activation of SspA.

Its subcellular location is the secreted. It carries out the reaction Preferential cleavage: Glu-|-Xaa, Asp-|-Xaa.. Its function is as follows. Preferentially cleaves peptide bonds on the carboxyl-terminal side of aspartate and glutamate. Along with other extracellular proteases it is involved in colonization and infection of human tissues. Required for proteolytic maturation of thiol protease SspB and inactivation of SspC, an inhibitor of SspB. It is the most important protease for degradation of fibronectin-binding protein (FnBP) and surface protein A, which are involved in adherence to host cells. May also protect bacteria against host defense mechanism by cleaving the immunoglobulin classes IgG, IgA and IgM. May be involved in the stability of secreted lipases. The polypeptide is Glutamyl endopeptidase (sspA) (Staphylococcus aureus (strain Mu50 / ATCC 700699)).